Consider the following 142-residue polypeptide: Ribosome-binding factor A (142 aa).

A compositionally biased stretch (basic and acidic residues) spans Asp118–Asp130. A disordered region spans residues Asp118 to Asp142. Positions Thr131–Asp142 are enriched in acidic residues.

This sequence belongs to the RbfA family. In terms of assembly, monomer. Binds 30S ribosomal subunits, but not 50S ribosomal subunits or 70S ribosomes.

Its subcellular location is the cytoplasm. Functionally, one of several proteins that assist in the late maturation steps of the functional core of the 30S ribosomal subunit. Associates with free 30S ribosomal subunits (but not with 30S subunits that are part of 70S ribosomes or polysomes). Required for efficient processing of 16S rRNA. May interact with the 5'-terminal helix region of 16S rRNA. In Shewanella denitrificans (strain OS217 / ATCC BAA-1090 / DSM 15013), this protein is Ribosome-binding factor A.